Reading from the N-terminus, the 401-residue chain is MRRSFLISAALGLSMSTPALAASIQSVLGYLRPTSHHHAPCADDVVLKQSAGSDSAAPDPLPSRVVHNWPNGTWIENISVRPNGNLLVSQSTPRGRVWQVKEPWLDEPKVELAYDFDEWVDRIIGIGETTPDKYVVVGSRFYSLDPQSSQVERTFCAMELDFTKGEKPSARLVARFPHANLLQSVSALPWDRSVVLISDQYLLHPRADWEDLTPGPGQIWRLDTKTGHHEIVMTNYAEMNTTYNHGLDVGINGIKIHGDHLYWINMDTGGAYRVRIDKYGYPTPLNAVPETLGVAEDALWDDFAMHGTRIGEESDDTTMFATSIVNLMAISPENGTIVPLAGVGTSEPMGFPGPTSAQFGRTEKDSHILYVTGKLFNVPPSIRDVVIQGWVRAIDTTGFHF.

The first 21 residues, 1–21 (MRRSFLISAALGLSMSTPALA), serve as a signal peptide directing secretion. 4 N-linked (GlcNAc...) asparagine glycosylation sites follow: asparagine 71, asparagine 77, asparagine 240, and asparagine 334.

The protein belongs to the eupF Diels-Alderase family.

Its pathway is secondary metabolite biosynthesis; terpenoid biosynthesis. Putative hetero-Diels-Alderase; part of the gene cluster that mediates the biosynthesis of xenovulene A, an unusual meroterpenoid that has potent inhibitory effects on the human gamma-aminobutyrate A (GABAA) benzodiazepine receptor. The first step of xenovulene A biosynthesis is the biosynthesis of 3-methylorcinaldehyde performed by the non-reducing polyketide synthase aspks1. The salicylate hydroxylase asL1 then catalyzes the oxidative dearomatization of 3-methylorcinaldehyde to yield a dearomatized hydroxycyclohexadione. The 2-oxoglutarate-dependent dioxygenase asL3 further catalyzes the oxidative ring expansion to provide the first tropolone metabolite. The cytochrome P450 monooxygenase asR2 allows the synthesis of tropolone hemiacetal. In parallel, a previously unrecognised class of terpene cyclase, asR6, produces alpha-humulene from farnesylpyrophosphate (FPP). The putative Diels-Alderase asR5 probably catalyzes the formation of the tropolone-humulene skeleton by linking humulene and the polyketide moiety. Oxidative-ring contractions catalyzed by asL4 and asL6 then processively remove carbon atoms from the polyketide to yield xenovulene A. This Sarocladium schorii (Acremonium strictum (strain IMI 501407)) protein is Putative hetero-Diels-Alderase asR5.